The chain runs to 171 residues: Co-chaperone protein HscB homolog (171 aa).

The region spanning 2-74 is the J domain; it reads NHFELFRLPF…ISRAEYMLSE (73 aa).

The protein belongs to the HscB family. As to quaternary structure, interacts with HscA and stimulates its ATPase activity.

Its function is as follows. Co-chaperone involved in the maturation of iron-sulfur cluster-containing proteins. Seems to help targeting proteins to be folded toward HscA. The sequence is that of Co-chaperone protein HscB homolog from Photobacterium profundum (strain SS9).